The primary structure comprises 260 residues: Histidinol-phosphatase (260 aa).

Positions 67, 83, 85, and 86 each coordinate Mg(2+). E67 provides a ligand contact to substrate. Substrate-binding positions include 85–88 (IDGT), R185, and D213. Residue D213 coordinates Mg(2+).

The protein belongs to the inositol monophosphatase superfamily. Requires Mg(2+) as cofactor.

It carries out the reaction L-histidinol phosphate + H2O = L-histidinol + phosphate. It participates in amino-acid biosynthesis; L-histidine biosynthesis; L-histidine from 5-phospho-alpha-D-ribose 1-diphosphate: step 8/9. Functionally, catalyzes the dephosphorylation of histidinol-phosphate to histidinol, the direct precursor of histidine. This Mycobacterium tuberculosis (strain ATCC 25618 / H37Rv) protein is Histidinol-phosphatase (hisN).